The chain runs to 799 residues: Histidine biosynthesis trifunctional protein (799 aa).

The phosphoribosyl-AMP cyclohydrolase stretch occupies residues 1–229 (MVLPILPLID…FIVEQENVGF (229 aa)). The tract at residues 230–312 (CHLETMSCFG…FYFALAKLVA (83 aa)) is phosphoribosyl-ATP pyrophosphohydrolase. A histidinol dehydrogenase region spans residues 313-799 (NDVSLKDVEN…KLGLIPKDFQ (487 aa)). 2 residues coordinate Zn(2+): Q618 and H621. Active-site residues include E687 and H688. Zn(2+) contacts are provided by D721 and H780.

It in the C-terminal section; belongs to the histidinol dehydrogenase family. Zn(2+) is required as a cofactor.

It catalyses the reaction 1-(5-phospho-beta-D-ribosyl)-5'-AMP + H2O = 1-(5-phospho-beta-D-ribosyl)-5-[(5-phospho-beta-D-ribosylamino)methylideneamino]imidazole-4-carboxamide. The catalysed reaction is 1-(5-phospho-beta-D-ribosyl)-ATP + H2O = 1-(5-phospho-beta-D-ribosyl)-5'-AMP + diphosphate + H(+). It carries out the reaction L-histidinol + 2 NAD(+) + H2O = L-histidine + 2 NADH + 3 H(+). Its pathway is amino-acid biosynthesis; L-histidine biosynthesis; L-histidine from 5-phospho-alpha-D-ribose 1-diphosphate: step 2/9. It functions in the pathway amino-acid biosynthesis; L-histidine biosynthesis; L-histidine from 5-phospho-alpha-D-ribose 1-diphosphate: step 3/9. The protein operates within amino-acid biosynthesis; L-histidine biosynthesis; L-histidine from 5-phospho-alpha-D-ribose 1-diphosphate: step 9/9. The polypeptide is Histidine biosynthesis trifunctional protein (Saccharomyces cerevisiae (strain ATCC 204508 / S288c) (Baker's yeast)).